We begin with the raw amino-acid sequence, 128 residues long: Large ribosomal subunit protein bL17 (128 aa).

It belongs to the bacterial ribosomal protein bL17 family. Part of the 50S ribosomal subunit. Contacts protein L32.

The protein is Large ribosomal subunit protein bL17 of Pseudomonas savastanoi pv. phaseolicola (strain 1448A / Race 6) (Pseudomonas syringae pv. phaseolicola (strain 1448A / Race 6)).